Consider the following 196-residue polypeptide: Large ribosomal subunit protein bL25 (196 aa).

This sequence belongs to the bacterial ribosomal protein bL25 family. CTC subfamily. Part of the 50S ribosomal subunit; part of the 5S rRNA/L5/L18/L25 subcomplex. Contacts the 5S rRNA. Binds to the 5S rRNA independently of L5 and L18.

In terms of biological role, this is one of the proteins that binds to the 5S RNA in the ribosome where it forms part of the central protuberance. The sequence is that of Large ribosomal subunit protein bL25 from Bacteroides thetaiotaomicron (strain ATCC 29148 / DSM 2079 / JCM 5827 / CCUG 10774 / NCTC 10582 / VPI-5482 / E50).